Consider the following 161-residue polypeptide: Allophycocyanin alpha chain (161 aa).

Residue N71 is modified to N4-methylasparagine. C81 is a (2R,3E)-phycocyanobilin binding site.

It belongs to the phycobiliprotein family. In terms of assembly, heterodimer of an alpha and a beta chain. Contains one covalently linked phycocyanobilin chromophore.

It is found in the plastid. The protein resides in the chloroplast thylakoid membrane. Its function is as follows. Light-harvesting photosynthetic bile pigment-protein from the phycobiliprotein complex. Allophycocyanin has a maximum absorption at approximately 650 nanometers. In Porphyra purpurea (Red seaweed), this protein is Allophycocyanin alpha chain (apcA).